The sequence spans 942 residues: Alpha,alpha-trehalose-phosphate synthase [UDP-forming] 1 (942 aa).

The tract at residues 28-57 (REKRKSNRARNPNDVAGSSENSENDLRLEG) is disordered. Positions 92-559 (QRLLVVANRL…AETFVSELND (468 aa)) are glycosyltransferase. The segment at 815-892 (DMPAIARSRP…LGNSRRPSPE (78 aa)) is disordered. Composition is skewed to low complexity over residues 821–833 (RSRP…AKSS) and 841–867 (SKST…NKSS). Polar residues predominate over residues 879-888 (SNHSLGNSRR).

This sequence in the N-terminal section; belongs to the glycosyltransferase 20 family. It in the C-terminal section; belongs to the trehalose phosphatase family. In terms of tissue distribution, expressed in seedlings, leaves, roots, stems, flowers and siliques.

Its subcellular location is the vacuole. The protein resides in the secreted. It localises to the cell wall. The protein localises to the cytoplasm. The enzyme catalyses D-glucose 6-phosphate + UDP-alpha-D-glucose = alpha,alpha-trehalose 6-phosphate + UDP + H(+). Its function is as follows. Required for normal embryo development, vegetative growth and transition to flowering. Regulates embryo growth, cell wall deposition, starch and sucrose degradation, but not cell differentiation. Involved in the regulation of glucose sensing and signaling genes during plant development. This chain is Alpha,alpha-trehalose-phosphate synthase [UDP-forming] 1, found in Arabidopsis thaliana (Mouse-ear cress).